Here is a 302-residue protein sequence, read N- to C-terminus: Homoserine O-acetyltransferase (302 aa).

Cys-142 acts as the Acyl-thioester intermediate in catalysis. Substrate is bound by residues Lys-163 and Ser-192. His-235 (proton acceptor) is an active-site residue. Residue Glu-237 is part of the active site. Arg-249 provides a ligand contact to substrate.

It belongs to the MetA family.

Its subcellular location is the cytoplasm. It catalyses the reaction L-homoserine + acetyl-CoA = O-acetyl-L-homoserine + CoA. The protein operates within amino-acid biosynthesis; L-methionine biosynthesis via de novo pathway; O-acetyl-L-homoserine from L-homoserine: step 1/1. Functionally, transfers an acetyl group from acetyl-CoA to L-homoserine, forming acetyl-L-homoserine. The chain is Homoserine O-acetyltransferase from Geobacillus kaustophilus (strain HTA426).